A 160-amino-acid polypeptide reads, in one-letter code: SsrA-binding protein (160 aa).

The interval 131–160 (KKEYDKRDTERERDAGRELQRAVRNKGKED) is disordered.

This sequence belongs to the SmpB family.

Its subcellular location is the cytoplasm. Required for rescue of stalled ribosomes mediated by trans-translation. Binds to transfer-messenger RNA (tmRNA), required for stable association of tmRNA with ribosomes. tmRNA and SmpB together mimic tRNA shape, replacing the anticodon stem-loop with SmpB. tmRNA is encoded by the ssrA gene; the 2 termini fold to resemble tRNA(Ala) and it encodes a 'tag peptide', a short internal open reading frame. During trans-translation Ala-aminoacylated tmRNA acts like a tRNA, entering the A-site of stalled ribosomes, displacing the stalled mRNA. The ribosome then switches to translate the ORF on the tmRNA; the nascent peptide is terminated with the 'tag peptide' encoded by the tmRNA and targeted for degradation. The ribosome is freed to recommence translation, which seems to be the essential function of trans-translation. This Pseudomonas fluorescens (strain Pf0-1) protein is SsrA-binding protein.